The chain runs to 422 residues: SPbeta prophage-derived glycosyltransferase SunS (422 aa).

This sequence belongs to the glycosyltransferase 2 family.

Its function is as follows. Transfers a hexose moiety onto 'Cys-41' of bacteriocin sublancin-168 (SunA). Accepts UDP-glucose (UDP-Glc), UDP-N-acetylglucosamine (UDP-GlcNAc), UDP-galactose (UDP-Gal), UDP-xylose (UDP-Xyl) and GDP-mannose as substrate. The chain is SPbeta prophage-derived glycosyltransferase SunS (sunS) from Bacillus subtilis (strain 168).